We begin with the raw amino-acid sequence, 297 residues long: Ribosomal protein L11 methyltransferase (297 aa).

S-adenosyl-L-methionine contacts are provided by Thr139, Gly164, Asp186, and Asn233.

The protein belongs to the methyltransferase superfamily. PrmA family.

It localises to the cytoplasm. It catalyses the reaction L-lysyl-[protein] + 3 S-adenosyl-L-methionine = N(6),N(6),N(6)-trimethyl-L-lysyl-[protein] + 3 S-adenosyl-L-homocysteine + 3 H(+). In terms of biological role, methylates ribosomal protein L11. In Trichodesmium erythraeum (strain IMS101), this protein is Ribosomal protein L11 methyltransferase.